Consider the following 578-residue polypeptide: Asparagine synthetase [glutamine-hydrolyzing] 2 (578 aa).

Cys2 serves as the catalytic For GATase activity. One can recognise a Glutamine amidotransferase type-2 domain in the interval 2–185 (CGILAVLGCI…PGHIYSSKQG (184 aa)). Residues 50–54 (RLAII), 75–77 (NGE), and Asp98 each bind L-glutamine. Residues 210–450 (LRNAFEKAVI…LPKHILYRQK (241 aa)) form the Asparagine synthetase domain. Residues Leu231, Ile267, and 341-342 (SG) contribute to the ATP site.

As to expression, expressed in the vascular region adjacent to leaf mesophyll cells in the companion cell-sieve tube element complex.

It carries out the reaction L-aspartate + L-glutamine + ATP + H2O = L-asparagine + L-glutamate + AMP + diphosphate + H(+). It participates in amino-acid biosynthesis; L-asparagine biosynthesis. Functionally, essential for nitrogen assimilation, distribution and remobilization within the plant via the phloem. In Arabidopsis thaliana (Mouse-ear cress), this protein is Asparagine synthetase [glutamine-hydrolyzing] 2 (ASN2).